Here is a 515-residue protein sequence, read N- to C-terminus: Probable cytosol aminopeptidase (515 aa).

Residues lysine 279 and aspartate 284 each coordinate Mn(2+). The active site involves lysine 291. Mn(2+)-binding residues include aspartate 302, aspartate 361, and glutamate 363. Arginine 365 is a catalytic residue.

It belongs to the peptidase M17 family. Requires Mn(2+) as cofactor.

Its subcellular location is the cytoplasm. It carries out the reaction Release of an N-terminal amino acid, Xaa-|-Yaa-, in which Xaa is preferably Leu, but may be other amino acids including Pro although not Arg or Lys, and Yaa may be Pro. Amino acid amides and methyl esters are also readily hydrolyzed, but rates on arylamides are exceedingly low.. The enzyme catalyses Release of an N-terminal amino acid, preferentially leucine, but not glutamic or aspartic acids.. In terms of biological role, presumably involved in the processing and regular turnover of intracellular proteins. Catalyzes the removal of unsubstituted N-terminal amino acids from various peptides. The protein is Probable cytosol aminopeptidase of Mycobacterium bovis (strain ATCC BAA-935 / AF2122/97).